We begin with the raw amino-acid sequence, 90 residues long: Large ribosomal subunit protein bL27 (90 aa).

Belongs to the bacterial ribosomal protein bL27 family.

This Rhodopseudomonas palustris (strain BisB5) protein is Large ribosomal subunit protein bL27.